The sequence spans 140 residues: L-fucose mutarotase (140 aa).

Residue histidine 22 is the Proton donor of the active site. Residues aspartate 30, arginine 107, and 129–131 (YGN) contribute to the substrate site.

The protein belongs to the RbsD / FucU family. FucU mutarotase subfamily. In terms of assembly, homodecamer.

The protein localises to the cytoplasm. The enzyme catalyses alpha-L-fucose = beta-L-fucose. Its pathway is carbohydrate metabolism; L-fucose metabolism. Functionally, involved in the anomeric conversion of L-fucose. The polypeptide is L-fucose mutarotase (Klebsiella pneumoniae subsp. pneumoniae (strain ATCC 700721 / MGH 78578)).